Consider the following 2323-residue polypeptide: C2 domain-containing protein 3 (2323 aa).

Disordered regions lie at residues 1–27 (MKQR…SPST), 193–215 (RELR…SCRG), 402–426 (WNGL…DLND), 444–509 (SDVG…HTPA), 537–556 (PDSP…PPKP), and 698–745 (KLSS…TKKT). Over residues 200-209 (ESSNTQSMIP) the composition is skewed to polar residues. Serine 453 carries the phosphoserine modification. The segment covering 474–483 (KVVESKEQKQ) has biased composition (basic and acidic residues). Residues 504–663 (PGHTPAMSLS…IQSELLSFSS (160 aa)) enclose the C2 1 domain. A compositionally biased stretch (polar residues) spans 698 to 735 (KLSSSTQPAPVSAATSSDTILPETGQDTACTRNPQSSN). Serine 713 bears the Phosphoserine mark. C2 domains lie at 771–903 (SCNL…SRLL), 969–1131 (QPPV…YRED), 1155–1323 (SSGF…TGWY), and 1383–1517 (KEEE…TLTI). Over residues 1550–1574 (EPARELDSMDCSSHSESEQHPRKSD) the composition is skewed to basic and acidic residues. Disordered stretches follow at residues 1550-1599 (EPAR…NSAA) and 1798-1824 (LAHT…AARH). A compositionally biased stretch (polar residues) spans 1584–1599 (LQTSPTSTQVHGNSAA). The 129-residue stretch at 1598–1726 (AAAQVCPAQE…SGFQFICGWY (129 aa)) folds into the C2 6 domain. Position 1871 is a phosphoserine (serine 1871). Disordered regions lie at residues 1891–1918 (FSSQ…GRQD), 1952–2013 (ALTS…GGML), 2074–2163 (SEVL…SVGW), 2182–2231 (SEAF…EVST), and 2261–2323 (SHSP…TEET). The span at 1892-1904 (SSQSSPAVSQSQE) shows a compositional bias: low complexity. 2 stretches are compositionally biased toward polar residues: residues 1952-1965 (ALTS…SRAV) and 2074-2083 (SEVLSPQPTE). A compositionally biased stretch (low complexity) spans 2110-2125 (AVSPQPAQGSPSQSGV). Residues 2147 to 2158 (PSLTFSEAQEGS) show a composition bias toward polar residues. Residues 2182-2197 (SEAFSSEFSDSSESFE) show a composition bias toward low complexity. The span at 2207–2216 (SKREDYKDSP) shows a compositional bias: basic and acidic residues. Positions 2222–2231 (QVPTGSEVST) are enriched in polar residues.

As to quaternary structure, interacts with OFD1; OFD1 may act as a negative regulator of C2CD3. Associates with the BBSome complex. Interacts with IFT88, BBS4 and PCM1.

It is found in the cytoplasm. The protein resides in the cytoskeleton. The protein localises to the cilium basal body. It localises to the microtubule organizing center. Its subcellular location is the centrosome. It is found in the centriole. Functionally, component of the centrioles that acts as a positive regulator of centriole elongation. Promotes assembly of centriolar distal appendage, a structure at the distal end of the mother centriole that acts as an anchor of the cilium, and is required for recruitment of centriolar distal appendages proteins CEP83, SCLT1, CEP89, FBF1 and CEP164. Not required for centriolar satellite integrity or RAB8 activation. Required for primary cilium formation. Required for sonic hedgehog/SHH signaling and for proteolytic processing of GLI3. In Mus musculus (Mouse), this protein is C2 domain-containing protein 3 (C2cd3).